We begin with the raw amino-acid sequence, 1112 residues long: Glutamate receptor-interacting protein 1 (1112 aa).

S43 bears the Phosphoserine mark. PDZ domains lie at 53–136 (VVEL…EYEL), 150–238 (TVEV…EYDV), 252–336 (LVEV…LPHH), 471–560 (EVVL…EFDV), 572–657 (HVKL…RKDE), and 672–754 (TVEL…KKQT). Disordered regions lie at residues 752–796 (KQTD…VYPS), 841–886 (KRAS…AEQE), and 922–963 (NHEA…DVGR). Low complexity predominate over residues 869–880 (STASGFAGASDS). The span at 928 to 958 (ARSQLGRQASFQERSNSRPHYSQTTRSNTLP) shows a compositional bias: polar residues. The 83-residue stretch at 988–1070 (KVTLYKDSGM…KLDLVISRNP (83 aa)) folds into the PDZ 7 domain. The tract at residues 1077-1112 (IEQPALPSDWSEQNSAFFQQPSHGGNLETREPTNTL) is disordered. Residues 1086–1099 (WSEQNSAFFQQPSH) are compositionally biased toward polar residues.

Interacts with EFNB1, EPHA7, EPHB2, EFNB3, KIF5A, KIF5C, KIF5B and the C-terminal tail of PRLHR. Forms a ternary complex with GRIA2 and CSPG4. Can form homomultimers or heteromultimers with GRIP2. Interacts with GRIA2, GRIA3, GRIPAP1/GRASP1, PPFIA1, PPFIA4, FRAS1, PLCD4, PTPRF and liprins-alpha. Interacts with ATAD1 in an ATP-dependent manner. ATAD1-catalyzed ATP hydrolysis disrupts binding to ATAD1 and to GRIA2 and leads to AMPAR complex disassembly. Interacts with SLC30A9. Interacts with BUD23. Forms a complex with NSG1, GRIA2 and STX12; controls the intracellular fate of AMPAR and the endosomal sorting of the GRIA2 subunit toward recycling and membrane targeting. Interacts with NSG1. As to expression, expressed in brain, testis and retina. In brain highly expressed in the olfactory bulb, cortex and hippocampus and lower level in thalamus, cerebellum and spinal cord. In brain it is found in the perikaryon, dendrites, dendritic shafts, dendritic spines and, excitatory and inhibitory synapses of neurons. In retina, it is most abundant in the plexiform layers than in perikarya.

The protein resides in the cytoplasmic vesicle. It is found in the perikaryon. The protein localises to the cell projection. It localises to the dendrite. Its subcellular location is the cytoplasm. The protein resides in the endomembrane system. It is found in the postsynaptic cell membrane. The protein localises to the postsynaptic density. It localises to the endoplasmic reticulum membrane. In terms of biological role, may play a role as a localized scaffold for the assembly of a multiprotein signaling complex and as mediator of the trafficking of its binding partners at specific subcellular location in neurons. Through complex formation with NSG1, GRIA2 and STX12 controls the intracellular fate of AMPAR and the endosomal sorting of the GRIA2 subunit toward recycling and membrane targeting. The sequence is that of Glutamate receptor-interacting protein 1 (Grip1) from Rattus norvegicus (Rat).